The following is a 344-amino-acid chain: Protein RecA (344 aa).

66 to 73 (GPESSGKT) contributes to the ATP binding site.

It belongs to the RecA family.

Its subcellular location is the cytoplasm. Functionally, can catalyze the hydrolysis of ATP in the presence of single-stranded DNA, the ATP-dependent uptake of single-stranded DNA by duplex DNA, and the ATP-dependent hybridization of homologous single-stranded DNAs. It interacts with LexA causing its activation and leading to its autocatalytic cleavage. The chain is Protein RecA from Azoarcus sp. (strain BH72).